The primary structure comprises 379 residues: Cytochrome b (379 aa).

The next 4 helical transmembrane spans lie at 33–53, 77–98, 113–133, and 178–198; these read FGSL…FLAM, WLIR…YLHI, WNIG…GYVL, and FFAF…IHLL. His-83 and His-97 together coordinate heme b. Heme b-binding residues include His-182 and His-196. His-201 lines the a ubiquinone pocket. The next 4 helical transmembrane spans lie at 226-246, 288-308, 320-340, and 347-367; these read YKDL…ALFY, LGGV…PILH, ASQL…WIGG, and YIII…VLNP.

It belongs to the cytochrome b family. As to quaternary structure, the cytochrome bc1 complex contains 3 respiratory subunits (MT-CYB, CYC1 and UQCRFS1), 2 core proteins (UQCRC1 and UQCRC2) and probably 6 low-molecular weight proteins. Heme b is required as a cofactor.

It localises to the mitochondrion inner membrane. Functionally, component of the ubiquinol-cytochrome c reductase complex (complex III or cytochrome b-c1 complex) that is part of the mitochondrial respiratory chain. The b-c1 complex mediates electron transfer from ubiquinol to cytochrome c. Contributes to the generation of a proton gradient across the mitochondrial membrane that is then used for ATP synthesis. In Anguilla interioris (Highlands long-finned eel), this protein is Cytochrome b (mt-cyb).